A 117-amino-acid polypeptide reads, in one-letter code: Acylphosphatase (117 aa).

In terms of domain architecture, Acylphosphatase-like spans 31 to 117 (RWRWIIQGQV…RGDDWFEVRY (87 aa)). Residues arginine 46 and asparagine 64 contribute to the active site.

Belongs to the acylphosphatase family.

The enzyme catalyses an acyl phosphate + H2O = a carboxylate + phosphate + H(+). The chain is Acylphosphatase (acyP) from Synechococcus sp. (strain CC9902).